Here is a 224-residue protein sequence, read N- to C-terminus: MKILWIGRTQYAEAWRLMKSLHCAVAQGLTGDIALVTEHEPVVTVGKHGRLNNVIKWDVPVYLVERGGDATYHGPGQAVVYPIVALRWPLKRYIDAIEDAVIKTLGTYGILAGKKQGHRGVWVGDRKIASIGIAVENNVAYHGVAINVTIDPREFARINPCGLPASTMISMKELGVVAEVRDVGIETAKKLALELGLTPELISKPPEVPQVAEELKPVRVAINA.

The 172-residue stretch at 28–199 (GLTGDIALVT…KLALELGLTP (172 aa)) folds into the BPL/LPL catalytic domain. Substrate-binding positions include 66-73 (RGGDATYH), 130-132 (SIG), and 143-145 (GVA). Cysteine 161 acts as the Acyl-thioester intermediate in catalysis.

The protein belongs to the LipB family.

The protein localises to the cytoplasm. The enzyme catalyses octanoyl-[ACP] + L-lysyl-[protein] = N(6)-octanoyl-L-lysyl-[protein] + holo-[ACP] + H(+). It functions in the pathway protein modification; protein lipoylation via endogenous pathway; protein N(6)-(lipoyl)lysine from octanoyl-[acyl-carrier-protein]: step 1/2. Functionally, catalyzes the transfer of endogenously produced octanoic acid from octanoyl-acyl-carrier-protein onto the lipoyl domains of lipoate-dependent enzymes. Lipoyl-ACP can also act as a substrate although octanoyl-ACP is likely to be the physiological substrate. This chain is Probable octanoyltransferase, found in Pyrobaculum aerophilum (strain ATCC 51768 / DSM 7523 / JCM 9630 / CIP 104966 / NBRC 100827 / IM2).